Here is a 625-residue protein sequence, read N- to C-terminus: Arginine--tRNA ligase (625 aa).

A 'HIGH' region motif is present at residues 117-127 (ANPIHPLHIGH).

Belongs to the class-I aminoacyl-tRNA synthetase family.

Its subcellular location is the cytoplasm. The enzyme catalyses tRNA(Arg) + L-arginine + ATP = L-arginyl-tRNA(Arg) + AMP + diphosphate. The protein is Arginine--tRNA ligase of Saccharolobus solfataricus (strain ATCC 35092 / DSM 1617 / JCM 11322 / P2) (Sulfolobus solfataricus).